The chain runs to 900 residues: Nonribosomal peptide synthetase AMT10 (900 aa).

The adenylation stretch occupies residues 284 to 686; it reads KQAQQNPAAM…ARRNGYIKLR (403 aa). In terms of domain architecture, Carrier spans 824–900; it reads ELQSDMERYL…QMARNCSLLD (77 aa). S861 carries the post-translational modification O-(pantetheine 4'-phosphoryl)serine.

Belongs to the NRP synthetase family.

The protein operates within mycotoxin biosynthesis. Nonribosomal peptide synthetase; part of the gene clusters that mediate the biosynthesis of AM-toxins, host-selective toxins (HSTs) causing Alternaria blotch on apple, a worldwide distributed disease. AM-toxins are cyclic depsipeptides containing the 3 residues 2-hydroxy-isovaleric acid (2-HIV), dehydroalanine, L-alanine which are common for all 3 AM-toxins I to III. The fourth precursor is L-alpha-amino-methoxyphenyl-valeric acid (L-Amv) for AM-toxin I, L-alpha-amino-phenyl-valeric acid (L-Apv) for AM-toxin II, and L-alpha-amino-hydroxyphenyl-valeric acid (L-Ahv) for AM-toxin III. AM-toxins have two target sites for affecting susceptible apple cells; they cause invagination of the plasma membrane and electrolyte loss and chloroplast disorganization. The non-ribosomal peptide synthetase AMT1 contains 4 catalytic modules and is responsible for activation of each residue in AM-toxin. The aldo-keto reductase AMT2 catalyzes the conversion of 2-keto-isovaleric acid (2-KIV) to 2-hydroxy-isovaleric acid (2-HIV), one of the precursor residues incorporated by AMT1 during AM-toxin biosynthesis, by reduction of its ketone to an alcohol. The cytochrome P450 monooxygenase AMT3 and the thioesterase AMT4 are also important for AM-toxin production, but their exact function within the AM-toxin biosynthesis are not known yet. Up to 21 proteins (including AMT1 to AMT4) are predicted to be involved in AM-toxin biosynthesis since their expression ishighly up-regulated in AM-toxin-producing cultures. This chain is Nonribosomal peptide synthetase AMT10, found in Alternaria alternata (Alternaria rot fungus).